The following is a 115-amino-acid chain: Arsenic resistance transcriptional regulator ArsR2 (115 aa).

The 90-residue stretch at 1–90 (MITPPDVFKS…EMLQVTLQAN (90 aa)) folds into the HTH arsR-type domain. Arsenite is bound by residues Cys30 and Cys32. The H-T-H motif DNA-binding region spans 31–54 (VCELMCALNDSQPKISRHLAQLRS).

Homodimer.

Its subcellular location is the cytoplasm. Functionally, binds arsenite and regulates the expression of arsenic efflux pumps. In vitro, also binds antimony and bismuth, but not arsenate. This Pseudomonas putida (strain ATCC 47054 / DSM 6125 / CFBP 8728 / NCIMB 11950 / KT2440) protein is Arsenic resistance transcriptional regulator ArsR2.